The primary structure comprises 191 residues: A-type ATP synthase subunit E 1 (191 aa).

The protein belongs to the V-ATPase E subunit family. In terms of assembly, has multiple subunits with at least A(3), B(3), C, D, E, F, H, I and proteolipid K(x).

The protein resides in the cell membrane. In terms of biological role, component of the A-type ATP synthase that produces ATP from ADP in the presence of a proton gradient across the membrane. This chain is A-type ATP synthase subunit E 1, found in Methanospirillum hungatei JF-1 (strain ATCC 27890 / DSM 864 / NBRC 100397 / JF-1).